The sequence spans 354 residues: Ephrin-4 (354 aa).

The N-terminal stretch at 1-22 (MKRPLDFLLAICLILLRSSTFA) is a signal peptide. The Ephrin RBD domain occupies 23–173 (DEHTVHWNST…SKNMRLSMKV (151 aa)). A glycan (N-linked (GlcNAc...) asparagine) is linked at N30. 2 cysteine pairs are disulfide-bonded: C55-C92 and C80-C162. The disordered stretch occupies residues 173-196 (VLSSQPTPSPSSKPARSRTDARRQ). Over residues 175–186 (SSQPTPSPSSKP) the composition is skewed to low complexity. S335 carries GPI-anchor amidated serine lipidation. A propeptide spans 336–354 (SSSLPTFLIVFLIAVNLLF) (removed in mature form).

Belongs to the ephrin family. May undergo proteolysis by metalloprotease sup-17 to give rise to a soluble form.

The protein localises to the cell membrane. In terms of biological role, regulates the formation or stabilization of cell-cell contacts at several stages of epithelial morphogenesis. In early embryonic development, involved in ventral closure of the epidermis. During male tail morphogenesis, regulates precursor cell sorting together with mab-20 and allows the formation of distinct sensory rays. Probably acts as a ligand for lad-2 to regulate axon guidance of several neurons including SDQL, SDQR, SMD and PLN neurons during neurogenesis. This Caenorhabditis briggsae protein is Ephrin-4 (efn-4).